The following is a 50-amino-acid chain: Large ribosomal subunit protein bL32 (50 aa).

Basic residues predominate over residues 1-26 (MAVPKRRVSHTRSAKRRTHYKITLKK). The segment at 1–50 (MAVPKRRVSHTRSAKRRTHYKITLKKPVKDSDGSWKMPHMVNPNTGEYKN) is disordered.

Belongs to the bacterial ribosomal protein bL32 family.

This Aliarcobacter butzleri (strain RM4018) (Arcobacter butzleri) protein is Large ribosomal subunit protein bL32.